We begin with the raw amino-acid sequence, 121 residues long: MNYINFERKYVSNGIAGSIDTICLWKHQNGSVCEIEQYMTPNYVYMRFENGITVSITMKGSNFKIALDDDFRQRDLGTHPCWNGANRKLLVKTWIRHILSNRAKPEHLEAIFDVVLNEFDI.

This is an uncharacterized protein from Enterobacteria phage T4 (Bacteriophage T4).